A 348-amino-acid polypeptide reads, in one-letter code: N-formyl peptide receptor 2 (348 aa).

The N-linked (GlcNAc...) asparagine glycan is linked to asparagine 1. The Extracellular segment spans residues 1–24 (NFSTPLNEYEEGSYESAGYTVLRI). The chain crosses the membrane as a helical span at residues 25-47 (LPLVVLGVTFVLGVLGNGLVIWV). Residues 48-58 (AGFRMTRTVTT) lie on the Cytoplasmic side of the membrane. A helical transmembrane segment spans residues 59 to 80 (ICYLNLALADFSFTATLPFLIV). Topologically, residues 81 to 97 (SMAMGEKWPFGWFLCKL) are extracellular. A disulfide bridge connects residues cysteine 95 and cysteine 173. The helical transmembrane segment at 98–118 (IHIVVDINLFGSVFLIGFIAL) threads the bilayer. Residues 119–137 (DRCICVLHPVWAQNHRTVS) are Cytoplasmic-facing. A helical transmembrane segment spans residues 138-159 (LAMKVIVGPWILALVLTLPVFL). Residues 160–202 (FLTTVTIPNGDTYCTFNFASWGGTPEERLKVAITLLTARGIIR) lie on the Extracellular side of the membrane. A helical membrane pass occupies residues 203–223 (FVIGFSLPMSIVAICYGLIAA). The Cytoplasmic segment spans residues 224–239 (KIHKKGMIKSSRPLRV). A helical transmembrane segment spans residues 240–263 (LTAVVASFFICWFPFQLVALLGTV). The Extracellular portion of the chain corresponds to 264 to 283 (WLKEMLFYGKYKIIDILVNP). Residues 284-303 (TSSLAFFNCCLNPMLYVFVG) form a helical membrane-spanning segment. The Cytoplasmic portion of the chain corresponds to 304–348 (QDFRERLIHSLPTSLERALSEDSAPTNDTAANCASPPAETELQAM). Residues 322-348 (LSEDSAPTNDTAANCASPPAETELQAM) form a disordered region. Residues 326–335 (SAPTNDTAAN) are compositionally biased toward polar residues.

Belongs to the G-protein coupled receptor 1 family. Interacts with Amyloid-beta protein 42, product of APP; the interaction takes place at the cell surface and the complex is then rapidly internalized.

The protein localises to the cell membrane. Low affinity receptor for N-formyl-methionyl peptides, which are powerful neutrophil chemotactic factors. Binding of FMLP to the receptor causes activation of neutrophils. This response is mediated via a G-protein that activates a phosphatidylinositol-calcium second messenger system. Receptor for the chemokine-like protein FAM19A5, mediating FAM19A5-stimulated macrophage chemotaxis and the inhibitory effect on TNFSF11/RANKL-induced osteoclast differentiation. The protein is N-formyl peptide receptor 2 (FPR2) of Pan troglodytes (Chimpanzee).